The chain runs to 172 residues: Adenine phosphoribosyltransferase (172 aa).

The protein belongs to the purine/pyrimidine phosphoribosyltransferase family. As to quaternary structure, homodimer.

It is found in the cytoplasm. The enzyme catalyses AMP + diphosphate = 5-phospho-alpha-D-ribose 1-diphosphate + adenine. The protein operates within purine metabolism; AMP biosynthesis via salvage pathway; AMP from adenine: step 1/1. In terms of biological role, catalyzes a salvage reaction resulting in the formation of AMP, that is energically less costly than de novo synthesis. This is Adenine phosphoribosyltransferase from Hydrogenovibrio crunogenus (strain DSM 25203 / XCL-2) (Thiomicrospira crunogena).